The primary structure comprises 171 residues: 3-hydroxydecanoyl-[acyl-carrier-protein] dehydratase (171 aa).

His71 is a catalytic residue.

It belongs to the thioester dehydratase family. FabA subfamily. Homodimer.

The protein localises to the cytoplasm. The catalysed reaction is a (3R)-hydroxyacyl-[ACP] = a (2E)-enoyl-[ACP] + H2O. It catalyses the reaction (3R)-hydroxydecanoyl-[ACP] = (2E)-decenoyl-[ACP] + H2O. The enzyme catalyses (2E)-decenoyl-[ACP] = (3Z)-decenoyl-[ACP]. It participates in lipid metabolism; fatty acid biosynthesis. Functionally, necessary for the introduction of cis unsaturation into fatty acids. Catalyzes the dehydration of (3R)-3-hydroxydecanoyl-ACP to E-(2)-decenoyl-ACP and then its isomerization to Z-(3)-decenoyl-ACP. Can catalyze the dehydratase reaction for beta-hydroxyacyl-ACPs with saturated chain lengths up to 16:0, being most active on intermediate chain length. The polypeptide is 3-hydroxydecanoyl-[acyl-carrier-protein] dehydratase (Sinorhizobium fredii (strain NBRC 101917 / NGR234)).